Reading from the N-terminus, the 85-residue chain is Mitochondrial protein pet191 homolog (85 aa).

The 44-residue stretch at 18 to 61 (HSDCMFVKKKSARECLKNKDELPEECKNLIEAYGECKRQMLDMT) folds into the CHCH domain. A Cx10C motif motif is present at residues 21–32 (CMFVKKKSAREC). 2 disulfide bridges follow: C21/C53 and C32/C43. The Cx9C motif signature appears at 43–53 (CKNLIEAYGEC). The interval 65 to 85 (RIAPEKNTDQDTEKPSNVDEQ) is disordered.

It belongs to the PET191 family.

The protein localises to the mitochondrion. In terms of biological role, involved in the assembly of cytochrome c oxidase. The protein is Mitochondrial protein pet191 homolog of Schizosaccharomyces pombe (strain 972 / ATCC 24843) (Fission yeast).